We begin with the raw amino-acid sequence, 3165 residues long: Protein eyes shut homolog (3165 aa).

The signal sequence occupies residues 1–21 (MTDKSIIILSLMVFHSSFING). N-linked (GlcNAc...) asparagine glycans are attached at residues asparagine 42, asparagine 105, asparagine 117, and asparagine 166. EGF-like domains follow at residues 170 to 212 (KQQF…KYCQ), 213 to 254 (ELDA…KNCS), and 256 to 292 (IIVQ…PFCE). Intrachain disulfides connect cysteine 174–cysteine 189, cysteine 183–cysteine 200, cysteine 202–cysteine 211, cysteine 217–cysteine 228, cysteine 222–cysteine 242, cysteine 244–cysteine 253, cysteine 260–cysteine 270, cysteine 265–cysteine 280, and cysteine 282–cysteine 291. N-linked (GlcNAc...) asparagine glycans are attached at residues asparagine 252, asparagine 269, and asparagine 272. N-linked (GlcNAc...) asparagine glycosylation is found at asparagine 311 and asparagine 343. EGF-like domains follow at residues 332–368 (DVSE…LLCK) and 370–406 (FQTS…KNCE). Cystine bridges form between cysteine 341–cysteine 356 and cysteine 358–cysteine 367. Asparagine 382 carries an N-linked (GlcNAc...) asparagine glycan. Cysteine 396 and cysteine 405 are disulfide-bonded. N-linked (GlcNAc...) asparagine glycosylation is found at asparagine 506, asparagine 520, asparagine 521, asparagine 566, and asparagine 573. EGF-like domains follow at residues 566 to 602 (NITD…RLCV), 604 to 641 (NVDY…NICE), and 643 to 679 (DIED…TRCE). 2 cysteine pairs are disulfide-bonded: cysteine 592-cysteine 601 and cysteine 608-cysteine 620. Asparagine 611 and asparagine 628 each carry an N-linked (GlcNAc...) asparagine glycan. A disulfide bridge links cysteine 629 with cysteine 640. Asparagine 654 carries N-linked (GlcNAc...) asparagine glycosylation. 4 disulfide bridges follow: cysteine 669-cysteine 678, cysteine 685-cysteine 696, cysteine 690-cysteine 705, and cysteine 707-cysteine 719. Residues 681–720 (DLDECALHPCKSGATCIDQPGNYFCQCGPPFKVVDGFSCL) form the EGF-like 9; calcium-binding domain. An EGF-like 10 domain is found at 733-769 (NIDNCILNAFEHNSTYKDLHLSYQCVCLSGWEGNFCE). An N-linked (GlcNAc...) asparagine glycan is attached at asparagine 745. Disulfide bonds link cysteine 759-cysteine 768, cysteine 775-cysteine 786, cysteine 780-cysteine 795, cysteine 797-cysteine 806, cysteine 813-cysteine 824, cysteine 818-cysteine 835, cysteine 837-cysteine 846, cysteine 853-cysteine 866, cysteine 860-cysteine 876, cysteine 878-cysteine 887, cysteine 894-cysteine 905, cysteine 899-cysteine 914, cysteine 916-cysteine 925, cysteine 932-cysteine 943, cysteine 937-cysteine 952, cysteine 954-cysteine 963, cysteine 970-cysteine 981, cysteine 975-cysteine 990, cysteine 992-cysteine 1001, cysteine 1008-cysteine 1019, cysteine 1013-cysteine 1028, cysteine 1030-cysteine 1039, cysteine 1046-cysteine 1056, cysteine 1051-cysteine 1065, cysteine 1067-cysteine 1076, cysteine 1083-cysteine 1094, cysteine 1088-cysteine 1103, cysteine 1105-cysteine 1114, cysteine 1121-cysteine 1137, cysteine 1131-cysteine 1147, cysteine 1149-cysteine 1158, cysteine 1165-cysteine 1176, cysteine 1170-cysteine 1185, and cysteine 1187-cysteine 1196. Residues 771–807 (ESNECKMNPCKNNSTCTDLYKSYRCECTSGWTGQNCS) form the EGF-like 11; calcium-binding domain. N-linked (GlcNAc...) asparagine glycosylation is found at asparagine 782, asparagine 783, and asparagine 805. 3 EGF-like domains span residues 809–847 (EINE…QFCH), 849–888 (RYNP…KHCE), and 890–926 (DVKE…SLCE). N-linked (GlcNAc...) asparagine glycosylation is found at asparagine 862 and asparagine 863. In terms of domain architecture, EGF-like 15; calcium-binding spans 928–964 (EINECSSEPCKNNGTCVDLTNRFFCNCEPGYHGPFCE). Asparagine 940 carries N-linked (GlcNAc...) asparagine glycosylation. The EGF-like 16 domain maps to 966–1002 (EVNKCKISPCLDEENCVYRTDRYNCLCAPGYTGINCE). Residues 1004–1040 (NLDECLSEPCLHDGVCIDGINHYTCDCKSGFFGTHCE) form the EGF-like 17; calcium-binding domain. 3 consecutive EGF-like domains span residues 1042–1077 (NAND…IQCK), 1079–1115 (KIND…AYCE), and 1117–1159 (SIDN…QFCE). One can recognise an EGF-like 21; calcium-binding domain in the interval 1161–1197 (NINECSSSPCLHGANCEDHINGYVCKCQPGWSGHHCE). Residues asparagine 1509, asparagine 1906, asparagine 1941, and asparagine 2033 are each glycosylated (N-linked (GlcNAc...) asparagine). A Laminin G-like 1 domain is found at 1883 to 2063 (FSCVCYYGDS…AVRNYHINNC (181 aa)). 4 disulfides stabilise this stretch: cysteine 2037-cysteine 2063, cysteine 2103-cysteine 2114, cysteine 2108-cysteine 2128, and cysteine 2130-cysteine 2139. In terms of domain architecture, EGF-like 22 spans 2099–2140 (APSVCQEDVCHNGGTCRPIFLSSGIVSFQCDCPLHFTGRFCE). The Laminin G-like 2 domain occupies 2145 to 2339 (LFFPSFSGNS…NIENCHVPWC (195 aa)). N-linked (GlcNAc...) asparagine glycosylation is found at asparagine 2170, asparagine 2185, and asparagine 2228. Intrachain disulfides connect cysteine 2308–cysteine 2339, cysteine 2339–cysteine 2350, cysteine 2344–cysteine 2359, cysteine 2375–cysteine 2386, cysteine 2380–cysteine 2396, and cysteine 2398–cysteine 2407. EGF-like domains lie at 2335 to 2368 (HVPW…YSGK) and 2371 to 2408 (QFAS…PLCT). Asparagine 2347 carries an N-linked (GlcNAc...) asparagine glycan. N-linked (GlcNAc...) asparagine glycans are attached at residues asparagine 2412, asparagine 2453, asparagine 2484, asparagine 2506, and asparagine 2532. Residues 2419 to 2609 (SGTDAFGYTS…PNAGRSVGQC (191 aa)) form the Laminin G-like 3 domain. Disulfide bonds link cysteine 2576–cysteine 2609, cysteine 2614–cysteine 2625, and cysteine 2619–cysteine 2634. 2 consecutive EGF-like domains span residues 2610–2646 (HASP…AFCT) and 2648–2689 (TVSI…IYCE). Asparagine 2635 carries an N-linked (GlcNAc...) asparagine glycan. Intrachain disulfides connect cysteine 2636–cysteine 2645, cysteine 2652–cysteine 2668, cysteine 2662–cysteine 2677, and cysteine 2679–cysteine 2688. The region spanning 2717–2895 (DPSFRSSELS…AKGGSNVGDC (179 aa)) is the Laminin G-like 4 domain. 3 N-linked (GlcNAc...) asparagine glycosylation sites follow: asparagine 2775, asparagine 2800, and asparagine 2824. Intrachain disulfides connect cysteine 2868–cysteine 2895, cysteine 2900–cysteine 2911, cysteine 2905–cysteine 2920, and cysteine 2922–cysteine 2931. EGF-like domains lie at 2896 to 2932 (DGTA…NICN) and 2933 to 2970 (QSAY…RYCE). Asparagine 2914 carries N-linked (GlcNAc...) asparagine glycosylation. An N-linked (GlcNAc...) asparagine glycan is attached at asparagine 2932. Intrachain disulfides connect cysteine 2937-cysteine 2948, cysteine 2942-cysteine 2958, and cysteine 2960-cysteine 2969. Residues asparagine 2971, asparagine 3006, asparagine 3036, asparagine 3057, asparagine 3073, and asparagine 3082 are each glycosylated (N-linked (GlcNAc...) asparagine). In terms of domain architecture, Laminin G-like 5 spans 2975–3165 (FTTAKFMGNS…YDGDEQNEVT (191 aa)).

This sequence belongs to the EYS family. As to expression, expressed in retina (at protein level).

It is found in the cell projection. The protein localises to the cilium. Its subcellular location is the photoreceptor outer segment. It localises to the cytoplasm. The protein resides in the cytoskeleton. It is found in the cilium axoneme. The protein localises to the microtubule organizing center. Its subcellular location is the centrosome. It localises to the secreted. The protein resides in the extracellular space. It is found in the extracellular matrix. The protein localises to the interphotoreceptor matrix. Its function is as follows. Required to maintain the integrity of photoreceptor cells. Specifically required for normal morphology of the photoreceptor ciliary pocket, and might thus facilitate protein trafficking between the photoreceptor inner and outer segments via the transition zone. In Macaca fascicularis (Crab-eating macaque), this protein is Protein eyes shut homolog.